Consider the following 318-residue polypeptide: MTDKVQTTLLFLAIGEFSVGILGNAFIGLVNCMDWVKKRKIASIDLILTSLAISRICLLCVILLDCFMLVLYPDVYATGKQMRIIDFFWTLTNHLSIWFATCLSIYYFFKIANFFHPLFLWMKWRIDRVISWILLGCMVLSVFINLPATENLNADFRRCVKAKRKTNLTWSCRVTKAQHASTKLFLNLVTLLPFSVCLMSFFLLILSLWRHIRRMQLSATGCRDPSTEAHVRALKAVISFLLLFIAYYLSFLIATSSYFIPETELAVIFGEFIALIYPSSHSFILILGNSKLRRASLKVLWTVMSILKGRKFQQHKQI.

Over 1 to 9 the chain is Extracellular; that stretch reads MTDKVQTTL. A helical transmembrane segment spans residues 10–30; sequence LFLAIGEFSVGILGNAFIGLV. The Cytoplasmic segment spans residues 31-55; that stretch reads NCMDWVKKRKIASIDLILTSLAISR. The helical transmembrane segment at 56–76 threads the bilayer; sequence ICLLCVILLDCFMLVLYPDVY. The Extracellular portion of the chain corresponds to 77–94; it reads ATGKQMRIIDFFWTLTNH. A helical transmembrane segment spans residues 95 to 115; it reads LSIWFATCLSIYYFFKIANFF. Over 116 to 128 the chain is Cytoplasmic; sequence HPLFLWMKWRIDR. The helical transmembrane segment at 129-149 threads the bilayer; sequence VISWILLGCMVLSVFINLPAT. Topologically, residues 150 to 187 are extracellular; sequence ENLNADFRRCVKAKRKTNLTWSCRVTKAQHASTKLFLN. Asn-167 carries N-linked (GlcNAc...) asparagine glycosylation. Residues 188 to 208 form a helical membrane-spanning segment; it reads LVTLLPFSVCLMSFFLLILSL. Topologically, residues 209-235 are cytoplasmic; sequence WRHIRRMQLSATGCRDPSTEAHVRALK. The helical transmembrane segment at 236–256 threads the bilayer; it reads AVISFLLLFIAYYLSFLIATS. Residues 257-266 are Extracellular-facing; it reads SYFIPETELA. Residues 267–287 traverse the membrane as a helical segment; sequence VIFGEFIALIYPSSHSFILIL. Over 288–318 the chain is Cytoplasmic; that stretch reads GNSKLRRASLKVLWTVMSILKGRKFQQHKQI.

It belongs to the G-protein coupled receptor T2R family.

The protein resides in the membrane. Functionally, gustducin-coupled receptor implicated in the perception of bitter compounds in the oral cavity and the gastrointestinal tract. Signals through PLCB2 and the calcium-regulated cation channel TRPM5. The protein is Taste receptor type 2 member 7 (TAS2R7) of Macaca mulatta (Rhesus macaque).